Here is a 271-residue protein sequence, read N- to C-terminus: Pyrroline-5-carboxylate reductase (271 aa).

This sequence belongs to the pyrroline-5-carboxylate reductase family.

Its subcellular location is the cytoplasm. It carries out the reaction L-proline + NADP(+) = (S)-1-pyrroline-5-carboxylate + NADPH + 2 H(+). The catalysed reaction is L-proline + NAD(+) = (S)-1-pyrroline-5-carboxylate + NADH + 2 H(+). The protein operates within amino-acid biosynthesis; L-proline biosynthesis; L-proline from L-glutamate 5-semialdehyde: step 1/1. In terms of biological role, catalyzes the reduction of 1-pyrroline-5-carboxylate (PCA) to L-proline. The chain is Pyrroline-5-carboxylate reductase from Staphylococcus haemolyticus (strain JCSC1435).